A 129-amino-acid polypeptide reads, in one-letter code: CD59B glycoprotein (129 aa).

The signal sequence occupies residues 1–23 (MRAQRGLILLLLLLAVFCSTAVS). Residues 24–107 (LKCYNCLDPV…GLEEPNNAET (84 aa)) form the UPAR/Ly6 domain. Cystine bridges form between cysteine 26–cysteine 49, cysteine 29–cysteine 36, cysteine 42–cysteine 62, cysteine 68–cysteine 86, and cysteine 87–cysteine 92. N-linked (GlcNAc...) asparagine glycosylation occurs at asparagine 39. Residue asparagine 104 is the site of GPI-anchor amidated asparagine attachment. Positions 105–129 (AETSSLRKTALLGTSVLVAILKFCF) are cleaved as a propeptide — removed in mature form.

Interacts with T-cell surface antigen CD2. Post-translationally, N- and O-glycosylated. Widely expressed in the kidneys, brain, lungs, spleen and testis Testis-specific.

It is found in the cell membrane. It localises to the secreted. Its function is as follows. Potent inhibitor of the complement membrane attack complex (MAC) action, which protects self-cells from damage during complement activation. Acts by binding to the beta-haipins of C8 (C8A and C8B) components of the assembling MAC, forming an intermolecular beta-sheet that prevents incorporation of the multiple copies of C9 required for complete formation of the osmolytic pore. This is CD59B glycoprotein from Mus musculus (Mouse).